A 194-amino-acid polypeptide reads, in one-letter code: MIEKSTPAPITHAADADLIGPDKSLLIVDDDTAFLRRLARAMEARGFAVEIAESVAEGIAKAKTRPPKHAVIDLRLGDGSGLDVIEAIRGRRDDTRMIVLTGYGNIATAVNAVKLGALDYLAKPADADDILAALIQRPGERVEPPENPMSADRVRWEHIQRVYEMCERNVSETARRLNMHRRTLQRILAKRAPK.

The Response regulatory domain occupies 24-138; it reads SLLIVDDDTA…DILAALIQRP (115 aa). D73 carries the 4-aspartylphosphate modification.

Phosphorylated by ActS.

In terms of biological role, member of the two-component regulatory system ActS/ActR acting in acid tolerance. These data implicate that a two-component sensor may be involved in pH sensing and/or response. In Sinorhizobium medicae (strain WSM419) (Ensifer medicae), this protein is Acid tolerance regulatory protein ActR (actR).